The sequence spans 153 residues: UPF0768 protein PB2B2.18 (153 aa).

Belongs to the UPF0768 family.

In Schizosaccharomyces pombe (strain 972 / ATCC 24843) (Fission yeast), this protein is UPF0768 protein PB2B2.18.